The following is a 916-amino-acid chain: Protein prickle (916 aa).

2 disordered regions span residues 49–105 and 127–176; these read PLSP…AGGS and QHLQ…IPVD. A compositionally biased stretch (low complexity) spans 145–156; the sequence is SSPSPALSSSIT. The segment covering 157 to 171 has biased composition (gly residues); sequence TGGGGVTRGGGGGGH. Residues 167-275 enclose the PET domain; sequence GGGGHIIPVD…TVKQLATNQI (109 aa). 3 LIM zinc-binding domains span residues 274-338, 339-399, and 400-462; these read QICD…ETLK, PRCS…MFAE, and YCDF…GEPP. Disordered stretches follow at residues 460–593, 635–671, 692–725, and 763–870; these read EPPT…PNHR, VIPG…QPQS, DAIQ…ENLP, and RSKS…DTVY. Composition is skewed to polar residues over residues 507–517, 526–569, and 642–654; these read SPISERSTPHS, EMST…SRTL, and AKTN…SMPE. The segment covering 655–671 has biased composition (low complexity); sequence LSQSLQQQQQQQQQPQS. Basic residues predominate over residues 777–793; the sequence is RSSKSKRRSSHHHQHHR. Over residues 796–805 the composition is skewed to low complexity; the sequence is GESSSYSGTS. Over residues 829–844 the composition is skewed to basic and acidic residues; the sequence is VPDVEFIEHQDHHRGD. The segment covering 852-867 has biased composition (low complexity); it reads RSVCSTCSSSSSSADD.

It belongs to the prickle / espinas / testin family. In terms of assembly, interacts with dsh; PET and LIM domains interact with dsh DEP domain, in wing cells. Interacts with Vang in photoreceptor cells.

Its subcellular location is the cell membrane. Functionally, acts in a planar cell polarity (PCP) complex; polarization along the apical/basal axis of epithelial cells. PCP signaling in the wing disk requires the receptor fz and the cytoplasmic proteins dsh and pk. These act in a feedback loop leading to activation of the jnk cascade and subsequent polarized arrangement of hairs and bristles. Dgo and pk compete with one another for dsh binding, thereby modulating fz dsh activity and ensuring tight control over fz PCP signaling. Vang, stan and pk function together to regulate the establishment of tissue polarity in the adult eye. This chain is Protein prickle, found in Aedes aegypti (Yellowfever mosquito).